A 118-amino-acid polypeptide reads, in one-letter code: Cysteine-rich and transmembrane domain-containing protein 1 (118 aa).

Composition is skewed to low complexity over residues 1–54 (MNYE…QGYP) and 64–74 (YTAQPGYQGYP). Positions 1–82 (MNYEQPPAYT…YPQPGPPTNT (82 aa)) are disordered. The chain crosses the membrane as a helical span at residues 95–112 (SGEQACLATCWAALCCCC).

The protein belongs to the CYSTM1 family.

The protein resides in the membrane. In Danio rerio (Zebrafish), this protein is Cysteine-rich and transmembrane domain-containing protein 1 (cystm1).